The following is a 128-amino-acid chain: MAKRSSLTRRGVSPRAAARARRHMRVRKKVRGTPERPRLVVTRSLKHIVAQIVDDTKGHTLVSASTLEASIRGEEGRKTEKSHLVGKVLAERAKAAGITAVVFDRAGYRYHGRVAALANGAREGGLEF.

The disordered stretch occupies residues 1-36 (MAKRSSLTRRGVSPRAAARARRHMRVRKKVRGTPER). Residues 18 to 31 (ARARRHMRVRKKVR) show a composition bias toward basic residues.

It belongs to the universal ribosomal protein uL18 family. As to quaternary structure, part of the 50S ribosomal subunit; part of the 5S rRNA/L5/L18/L25 subcomplex. Contacts the 5S and 23S rRNAs.

Functionally, this is one of the proteins that bind and probably mediate the attachment of the 5S RNA into the large ribosomal subunit, where it forms part of the central protuberance. The protein is Large ribosomal subunit protein uL18 of Thermobifida fusca (strain YX).